A 134-amino-acid polypeptide reads, in one-letter code: Protein NrdI (134 aa).

The protein belongs to the NrdI family.

Probably involved in ribonucleotide reductase function. The polypeptide is Protein NrdI (Yersinia enterocolitica serotype O:8 / biotype 1B (strain NCTC 13174 / 8081)).